Consider the following 178-residue polypeptide: Large ribosomal subunit protein uL5 (178 aa).

The protein belongs to the universal ribosomal protein uL5 family. Part of the 50S ribosomal subunit; contacts the 5S rRNA and probably tRNA. Forms a bridge to the 30S subunit in the 70S ribosome.

Functionally, this is one of the proteins that bind and probably mediate the attachment of the 5S RNA into the large ribosomal subunit, where it forms part of the central protuberance. In the 70S ribosome it contacts protein S13 of the 30S subunit (bridge B1b), connecting the 2 subunits; this bridge is implicated in subunit movement. May contact the P site tRNA; the 5S rRNA and some of its associated proteins might help stabilize positioning of ribosome-bound tRNAs. The chain is Large ribosomal subunit protein uL5 from Archaeoglobus fulgidus (strain ATCC 49558 / DSM 4304 / JCM 9628 / NBRC 100126 / VC-16).